The sequence spans 429 residues: 4-hydroxy-3-methylbut-2-en-1-yl diphosphate synthase (flavodoxin) (429 aa).

Residues Cys310, Cys313, Cys356, and Glu363 each coordinate [4Fe-4S] cluster.

This sequence belongs to the IspG family. The cofactor is [4Fe-4S] cluster.

It carries out the reaction (2E)-4-hydroxy-3-methylbut-2-enyl diphosphate + oxidized [flavodoxin] + H2O + 2 H(+) = 2-C-methyl-D-erythritol 2,4-cyclic diphosphate + reduced [flavodoxin]. Its pathway is isoprenoid biosynthesis; isopentenyl diphosphate biosynthesis via DXP pathway; isopentenyl diphosphate from 1-deoxy-D-xylulose 5-phosphate: step 5/6. Its function is as follows. Converts 2C-methyl-D-erythritol 2,4-cyclodiphosphate (ME-2,4cPP) into 1-hydroxy-2-methyl-2-(E)-butenyl 4-diphosphate. The chain is 4-hydroxy-3-methylbut-2-en-1-yl diphosphate synthase (flavodoxin) from Bradyrhizobium sp. (strain BTAi1 / ATCC BAA-1182).